Here is a 296-residue protein sequence, read N- to C-terminus: MSLFDRLFILSQHLTPQHALSRAIGKLADSRTPFIKNTFIKWFIKRYNVNMQEALLPSAEDYTCFNDFFTRALKDGARPIHPDVSRLVTPVDGAVSQAGSIDYGKIFQAKGHSFSLVELLGGDLQRAQPFIGGEFATIYLSPKDYHRIHMPIDGELREMIFVPGKLYSVNPLTTENVPALFARNERVVCIFDTPLGPMSMTLVGAMIVASVETIWAGRVAPMSKTVRSYTYKPGEVTIKRGEEMGRFCLGSTVVMTFPKGAMRWREGLKAETPVRLGEDLGKILQTVATVDEQKTD.

Catalysis depends on charge relay system; for autoendoproteolytic cleavage activity residues D92, H149, and S251. The active-site Schiff-base intermediate with substrate; via pyruvic acid; for decarboxylase activity is S251. S251 bears the Pyruvic acid (Ser); by autocatalysis mark.

This sequence belongs to the phosphatidylserine decarboxylase family. PSD-B subfamily. Prokaryotic type I sub-subfamily. In terms of assembly, heterodimer of a large membrane-associated beta subunit and a small pyruvoyl-containing alpha subunit. Pyruvate is required as a cofactor. Is synthesized initially as an inactive proenzyme. Formation of the active enzyme involves a self-maturation process in which the active site pyruvoyl group is generated from an internal serine residue via an autocatalytic post-translational modification. Two non-identical subunits are generated from the proenzyme in this reaction, and the pyruvate is formed at the N-terminus of the alpha chain, which is derived from the carboxyl end of the proenzyme. The autoendoproteolytic cleavage occurs by a canonical serine protease mechanism, in which the side chain hydroxyl group of the serine supplies its oxygen atom to form the C-terminus of the beta chain, while the remainder of the serine residue undergoes an oxidative deamination to produce ammonia and the pyruvoyl prosthetic group on the alpha chain. During this reaction, the Ser that is part of the protease active site of the proenzyme becomes the pyruvoyl prosthetic group, which constitutes an essential element of the active site of the mature decarboxylase.

It localises to the cell membrane. It catalyses the reaction a 1,2-diacyl-sn-glycero-3-phospho-L-serine + H(+) = a 1,2-diacyl-sn-glycero-3-phosphoethanolamine + CO2. It participates in phospholipid metabolism; phosphatidylethanolamine biosynthesis; phosphatidylethanolamine from CDP-diacylglycerol: step 2/2. Its function is as follows. Catalyzes the formation of phosphatidylethanolamine (PtdEtn) from phosphatidylserine (PtdSer). This is Phosphatidylserine decarboxylase proenzyme from Hahella chejuensis (strain KCTC 2396).